A 257-amino-acid polypeptide reads, in one-letter code: NAD-capped RNA hydrolase NudC (257 aa).

Residues Lys-25 and Arg-69 each coordinate substrate. The Zn(2+) site is built by Cys-98 and Cys-101. Residue Glu-111 participates in substrate binding. Zn(2+) contacts are provided by Cys-116 and Cys-119. Position 124 (Tyr-124) interacts with substrate. The region spanning 125–248 (PQIAPCIIVA…TVARRLIEDT (124 aa)) is the Nudix hydrolase domain. A divalent metal cation contacts are provided by Ala-158, Glu-174, and Glu-178. The short motif at 159 to 180 (GFVEVGETLEQAVAREVMEESG) is the Nudix box element. Position 192–199 (192–199 (QPWPFPQS)) interacts with substrate. Glu-219 is an a divalent metal cation binding site. Ala-241 serves as a coordination point for substrate.

Belongs to the Nudix hydrolase family. NudC subfamily. As to quaternary structure, homodimer. Mg(2+) serves as cofactor. Requires Mn(2+) as cofactor. It depends on Zn(2+) as a cofactor.

It catalyses the reaction a 5'-end NAD(+)-phospho-ribonucleoside in mRNA + H2O = a 5'-end phospho-adenosine-phospho-ribonucleoside in mRNA + beta-nicotinamide D-ribonucleotide + 2 H(+). The enzyme catalyses NAD(+) + H2O = beta-nicotinamide D-ribonucleotide + AMP + 2 H(+). The catalysed reaction is NADH + H2O = reduced beta-nicotinamide D-ribonucleotide + AMP + 2 H(+). MRNA decapping enzyme that specifically removes the nicotinamide adenine dinucleotide (NAD) cap from a subset of mRNAs by hydrolyzing the diphosphate linkage to produce nicotinamide mononucleotide (NMN) and 5' monophosphate mRNA. The NAD-cap is present at the 5'-end of some mRNAs and stabilizes RNA against 5'-processing. Has preference for mRNAs with a 5'-end purine. Catalyzes the hydrolysis of a broad range of dinucleotide pyrophosphates. This chain is NAD-capped RNA hydrolase NudC, found in Escherichia coli O45:K1 (strain S88 / ExPEC).